The chain runs to 175 residues: Alkyl hydroperoxide reductase AhpD (175 aa).

The Proton donor role is filled by cysteine 131. Cysteine 131 and cysteine 134 are joined by a disulfide. Cysteine 134 functions as the Cysteine sulfenic acid (-SOH) intermediate in the catalytic mechanism.

The protein belongs to the AhpD family.

It catalyses the reaction N(6)-[(R)-dihydrolipoyl]-L-lysyl-[lipoyl-carrier protein] + a hydroperoxide = N(6)-[(R)-lipoyl]-L-lysyl-[lipoyl-carrier protein] + an alcohol + H2O. In terms of biological role, antioxidant protein with alkyl hydroperoxidase activity. Required for the reduction of the AhpC active site cysteine residues and for the regeneration of the AhpC enzyme activity. The protein is Alkyl hydroperoxide reductase AhpD of Brucella melitensis biotype 1 (strain ATCC 23456 / CCUG 17765 / NCTC 10094 / 16M).